A 749-amino-acid polypeptide reads, in one-letter code: Protein O-mannosyl-transferase 2 (749 aa).

The segment at 1–30 (MAASVVKTPKCPRRGSAKEQQSKASPKSNN) is disordered. Residues 34–54 (NWHWWILLASVFLITFATRFY) form a helical membrane-spanning segment. N-linked (GlcNAc...) asparagine glycans are attached at residues asparagine 78, asparagine 104, and asparagine 117. The next 5 membrane-spanning stretches (helical) occupy residues 126–146 (YFCT…VYDL), 173–193 (ILLD…MVKI), 204–224 (SVRW…TISV), 226–246 (FVGL…LWLI), and 266–286 (IALI…HLSV). Asparagine 288 and asparagine 312 each carry an N-linked (GlcNAc...) asparagine glycan. 3 consecutive MIR domains span residues 316 to 372 (PRDV…IKPH), 382 to 438 (LQLL…VLIV), and 443 to 499 (NETV…VEDN). A glycan (N-linked (GlcNAc...) asparagine) is linked at asparagine 443. 4 helical membrane passes run 572-592 (IWWS…GNAI), 645-665 (LGAA…FWAM), 669-689 (LYFH…GVMF), and 703-723 (VLLG…SPLA). N-linked (GlcNAc...) asparagine glycosylation is present at asparagine 735.

This sequence belongs to the glycosyltransferase 39 family. As to quaternary structure, interacts with Rt/POMT1.

The protein resides in the endoplasmic reticulum membrane. The catalysed reaction is a di-trans,poly-cis-dolichyl beta-D-mannosyl phosphate + L-seryl-[protein] = 3-O-(alpha-D-mannosyl)-L-seryl-[protein] + a di-trans,poly-cis-dolichyl phosphate + H(+). It carries out the reaction a di-trans,poly-cis-dolichyl beta-D-mannosyl phosphate + L-threonyl-[protein] = 3-O-(alpha-D-mannosyl)-L-threonyl-[protein] + a di-trans,poly-cis-dolichyl phosphate + H(+). Its pathway is protein modification; protein glycosylation. In terms of biological role, rt/POMT1 and tw/POMT2 function as a protein O-mannosyltransferase in association with each other to generate and maintain normal muscle development. The sequence is that of Protein O-mannosyl-transferase 2 from Drosophila pseudoobscura pseudoobscura (Fruit fly).